A 330-amino-acid polypeptide reads, in one-letter code: Phenylalanine--tRNA ligase alpha subunit (330 aa).

Mg(2+) is bound at residue glutamate 257.

The protein belongs to the class-II aminoacyl-tRNA synthetase family. Phe-tRNA synthetase alpha subunit type 1 subfamily. As to quaternary structure, tetramer of two alpha and two beta subunits. Mg(2+) is required as a cofactor.

The protein localises to the cytoplasm. The enzyme catalyses tRNA(Phe) + L-phenylalanine + ATP = L-phenylalanyl-tRNA(Phe) + AMP + diphosphate + H(+). The sequence is that of Phenylalanine--tRNA ligase alpha subunit from Nostoc sp. (strain PCC 7120 / SAG 25.82 / UTEX 2576).